The chain runs to 83 residues: Small ribosomal subunit protein uS17c (83 aa).

It belongs to the universal ribosomal protein uS17 family. Part of the 30S ribosomal subunit.

The protein resides in the plastid. It is found in the chloroplast. Its function is as follows. One of the primary rRNA binding proteins, it binds specifically to the 5'-end of 16S ribosomal RNA. The polypeptide is Small ribosomal subunit protein uS17c (rps17) (Porphyra purpurea (Red seaweed)).